The chain runs to 343 residues: Protein-glutamate methylesterase/protein-glutamine glutaminase 2 (343 aa).

Residues 5 to 122 (KVLVVDDSAI…SVGDMSGQLV (118 aa)) form the Response regulatory domain. Asp-56 is modified (4-aspartylphosphate). One can recognise a CheB-type methylesterase domain in the interval 154–343 (AETSNKVIAI…SIADEIVRMV (190 aa)). Active-site residues include Ser-166, His-192, and Asp-288.

This sequence belongs to the CheB family. In terms of processing, phosphorylated by CheA. Phosphorylation of the N-terminal regulatory domain activates the methylesterase activity.

It localises to the cytoplasm. The enzyme catalyses [protein]-L-glutamate 5-O-methyl ester + H2O = L-glutamyl-[protein] + methanol + H(+). It catalyses the reaction L-glutaminyl-[protein] + H2O = L-glutamyl-[protein] + NH4(+). Its function is as follows. Involved in chemotaxis. Part of a chemotaxis signal transduction system that modulates chemotaxis in response to various stimuli. Catalyzes the demethylation of specific methylglutamate residues introduced into the chemoreceptors (methyl-accepting chemotaxis proteins or MCP) by CheR. Also mediates the irreversible deamidation of specific glutamine residues to glutamic acid. The protein is Protein-glutamate methylesterase/protein-glutamine glutaminase 2 of Syntrophus aciditrophicus (strain SB).